A 940-amino-acid chain; its full sequence is Coatomer subunit beta (940 aa).

4 HEAT repeats span residues Phe-11 to Ser-48, Gln-90 to Glu-125, Leu-126 to His-162, and Ser-310 to Val-347.

Oligomeric complex that consists of at least the alpha, beta, beta', gamma, delta, epsilon and zeta subunits.

The protein resides in the cytoplasm. It is found in the golgi apparatus membrane. Its subcellular location is the cytoplasmic vesicle. It localises to the COPI-coated vesicle membrane. The coatomer is a cytosolic protein complex that binds to dilysine motifs and reversibly associates with Golgi non-clathrin-coated vesicles, which further mediate biosynthetic protein transport from the ER, via the Golgi up to the trans Golgi network. Coatomer complex is required for budding from Golgi membranes, and is essential for the retrograde Golgi-to-ER transport of dilysine-tagged proteins. The chain is Coatomer subunit beta (sec26) from Schizosaccharomyces pombe (strain 972 / ATCC 24843) (Fission yeast).